We begin with the raw amino-acid sequence, 415 residues long: Imidazolonepropionase (415 aa).

2 residues coordinate Fe(3+): H75 and H77. Positions 75 and 77 each coordinate Zn(2+). Residues R84, Y147, and H180 each coordinate 4-imidazolone-5-propanoate. Y147 is an N-formimidoyl-L-glutamate binding site. A Fe(3+)-binding site is contributed by H245. H245 provides a ligand contact to Zn(2+). 4-imidazolone-5-propanoate is bound at residue Q248. Residue D320 participates in Fe(3+) binding. D320 contacts Zn(2+). N322 and G324 together coordinate N-formimidoyl-L-glutamate. T325 is a binding site for 4-imidazolone-5-propanoate.

The protein belongs to the metallo-dependent hydrolases superfamily. HutI family. Requires Zn(2+) as cofactor. Fe(3+) serves as cofactor.

The protein resides in the cytoplasm. It catalyses the reaction 4-imidazolone-5-propanoate + H2O = N-formimidoyl-L-glutamate. It participates in amino-acid degradation; L-histidine degradation into L-glutamate; N-formimidoyl-L-glutamate from L-histidine: step 3/3. Functionally, catalyzes the hydrolytic cleavage of the carbon-nitrogen bond in imidazolone-5-propanoate to yield N-formimidoyl-L-glutamate. It is the third step in the universal histidine degradation pathway. This chain is Imidazolonepropionase, found in Photorhabdus laumondii subsp. laumondii (strain DSM 15139 / CIP 105565 / TT01) (Photorhabdus luminescens subsp. laumondii).